A 134-amino-acid polypeptide reads, in one-letter code: UPF0357 protein AAL017W (134 aa).

A signal peptide spans 1–23; the sequence is MFGLISLWHLFWLAVMAGILVVA.

This sequence belongs to the UPF0357 family.

The protein is UPF0357 protein AAL017W of Eremothecium gossypii (strain ATCC 10895 / CBS 109.51 / FGSC 9923 / NRRL Y-1056) (Yeast).